A 503-amino-acid polypeptide reads, in one-letter code: U6 snRNA (guanine-N(2))-methyltransferase THUMPD2 (503 aa).

The THUMP domain occupies 161–266 (CQLEKQIKEE…DIYSVVGIPV (106 aa)).

Belongs to the methyltransferase superfamily. As to quaternary structure, part of the heterodimeric THUMPD2-TRM112 methyltransferase complex; this complex forms an active tRNA methyltransferase, where TRMT112 acts as an activator of the catalytic subunit THUMPD2. As to expression, expressed in a variety of tissues including brain, colon, gingiva, heart, kidney, liver, lung, placenta, small intestine, spleen and thymus.

It is found in the nucleus. It carries out the reaction guanosine in U6 snRNA + S-adenosyl-L-methionine = N(2)-methylguanosine in U6 snRNA + S-adenosyl-L-homocysteine + H(+). Its function is as follows. Catalytic subunit of the THUMPD2-TRM112 methyltransferase complex, that specifically mediates the S-adenosyl-L-methionine-dependent N(2)-methylation of guanosine nucleotides, most probably at position 72 (m2G72), in the U6snRNA of the major spliceosome. This modification in the U6 snRNA affects the constitutive splicing efficiency of introns that have suboptimal splice sites and can impact final mRNA levels. This Homo sapiens (Human) protein is U6 snRNA (guanine-N(2))-methyltransferase THUMPD2.